A 359-amino-acid polypeptide reads, in one-letter code: 2-amino-3-carboxymuconate-6-semialdehyde decarboxylase (359 aa).

Over residues 1–13 (MENKETTTTTTTT) the composition is skewed to low complexity. Positions 1-21 (MENKETTTTTTTTNNGSDKKK) are disordered. The Zn(2+) site is built by His-29 and His-31. Arg-70 provides a ligand contact to substrate. Positions 197 and 314 each coordinate Zn(2+).

This sequence belongs to the metallo-dependent hydrolases superfamily. ACMSD family. Monomer.

It catalyses the reaction 2-amino-3-carboxymuconate 6-semialdehyde + H(+) = 2-aminomuconate 6-semialdehyde + CO2. It participates in secondary metabolite metabolism; quinolate metabolism. Converts alpha-amino-beta-carboxymuconate-epsilon-semialdehyde (ACMS) to alpha-aminomuconate semialdehyde (AMS). The chain is 2-amino-3-carboxymuconate-6-semialdehyde decarboxylase (acmsd) from Dictyostelium discoideum (Social amoeba).